We begin with the raw amino-acid sequence, 379 residues long: Acyl-CoA dehydrogenase (379 aa).

The protein belongs to the acyl-CoA dehydrogenase family. It depends on FAD as a cofactor.

The enzyme catalyses a 2,3-saturated acyl-CoA + A = a 2,3-dehydroacyl-CoA + AH2. In Bacillus subtilis (strain 168), this protein is Acyl-CoA dehydrogenase (mmgC).